Here is a 199-residue protein sequence, read N- to C-terminus: Chaperone protein TorD (199 aa).

This sequence belongs to the TorD/DmsD family. TorD subfamily.

It localises to the cytoplasm. Its function is as follows. Involved in the biogenesis of TorA. Acts on TorA before the insertion of the molybdenum cofactor and, as a result, probably favors a conformation of the apoenzyme that is competent for acquiring the cofactor. The chain is Chaperone protein TorD from Escherichia coli O45:K1 (strain S88 / ExPEC).